The following is a 908-amino-acid chain: Adhesion G-protein coupled receptor F1 (908 aa).

An N-terminal signal peptide occupies residues 1–20 (MRIGLLWLVPLFTLTEGTDG). Over 21–588 (FLQQKNDGRR…VVPVVKWITY (568 aa)) the chain is Extracellular. N-linked (GlcNAc...) asparagine glycans are attached at residues N133, N167, N328, N353, N367, N388, N422, N453, N510, N519, N526, and N551. In terms of domain architecture, SEA spans 147-255 (ERAKVWGTFE…GSFRVFGKAP (109 aa)). The GAIN-B domain occupies 434-577 (PVTQIQSTRG…SMLMSPFVPS (144 aa)). 2 cysteine pairs are disulfide-bonded: C532/C559 and C547/C561. A GPS region spans residues 532–577 (CVFWDFSQLQWSNAGCQLVNETLDTVLCRCSHLTSFSMLMSPFVPS). Residues 566–574 (SFSMLMSPF) are stachel. Residues 589-609 (IGLSISIASLILCLIIESLFW) form a helical membrane-spanning segment. Residues 610-622 (KQTKRSQTSYTRN) lie on the Cytoplasmic side of the membrane. A helical transmembrane segment spans residues 623 to 643 (ICLVNIAVSLLIADVWFIIAA). At 644-658 (TVDPSVSPSGVCVAA) the chain is on the extracellular side. Cysteines 655 and 731 form a disulfide. A helical transmembrane segment spans residues 659–679 (VFFTHFFYLAVFFWMLVLGIL). Over 680-697 (LAYRIILVFHHMALTTMM) the chain is Cytoplasmic. A helical membrane pass occupies residues 698–718 (AIGFCLGYGCPLLISIITLAV). Residues 719–742 (TQPSNSYKRNDVCWLNWSDKSKPL) are Extracellular-facing. N-linked (GlcNAc...) asparagine glycosylation occurs at N734. Residues 743 to 763 (LAFVVPALTIVAVNLVVVLLV) traverse the membrane as a helical segment. Residues 764 to 789 (LRKLWRPAVGERLNQDDKATAIRMGK) lie on the Cytoplasmic side of the membrane. Residues 790–810 (SLLVLTPLLGLTWGFGIGTMA) traverse the membrane as a helical segment. Residues 811-818 (NSHNLAWH) are Extracellular-facing. Residues 819 to 839 (VLFALLNAFQGFFIFCFGILL) form a helical membrane-spanning segment. Topologically, residues 840–908 (DTKLRQLLSN…ITLTQFLSTE (69 aa)) are cytoplasmic.

Belongs to the G-protein coupled receptor 2 family. Adhesion G-protein coupled receptor (ADGR) subfamily. In terms of assembly, heterodimer of 2 chains generated by proteolytic processing; the large extracellular N-terminal fragment and the membrane-bound C-terminal fragment predominantly remain associated and non-covalently linked. Post-translationally, autoproteolytically processed at the GPS region of the GAIN-B domain; this cleavage modulates receptor activity. In terms of tissue distribution, expressed in liver, kidney and adrenal gland. In kidney strong expression in the renal pelvis and the ureter.

The protein resides in the cell membrane. Forms a heterodimer of 2 chains generated by proteolytic processing that remain associated through non-covalent interactions mediated by the GAIN-B domain. In the inactivated receptor, the Stachel sequence (also named stalk) is embedded in the GAIN-B domain, where it adopts a beta-strand conformation. On activation, the Stachel moves into the 7 transmembrane region and adopts a twisted hook-shaped configuration that forms contacts within the receptor, leading to coupling of a G-alpha protein, which activates signaling. The cleaved GAIN-B and N-terminal domains can then dissociate from the rest of the receptor. Functionally, adhesion G-protein coupled receptor (aGPCR) for N-docosahexaenoylethanolamine (synaptamide), an omega-3 fatty acid lipid highly enriched in the brain. Ligand binding causes a conformation change that triggers signaling via guanine nucleotide-binding proteins (G proteins) and modulates the activity of downstream effectors, such as adenylate cyclase. ADGRF1 is coupled to G(s) G proteins and mediates activation of adenylate cyclase activity. Also able to couple to G(q), G(i) and G(12)/G(13) G proteins; additional evidence is however required to confirm this result in vivo. Involved in the development of neurons and cognitive function. In liver, involved in fat accumulation. This is Adhesion G-protein coupled receptor F1 from Mus musculus (Mouse).